A 225-amino-acid chain; its full sequence is Small ribosomal subunit protein uS3 (225 aa).

Residues 16–85 form the KH type-2 domain; the sequence is VCEYVVKETE…TPQIEVKDVK (70 aa). Residues 202 to 225 are disordered; it reads EVGTESKADQTDVEGRETGNAEES. Residues 205-225 show a composition bias toward basic and acidic residues; it reads TESKADQTDVEGRETGNAEES.

This sequence belongs to the universal ribosomal protein uS3 family. Part of the 30S ribosomal subunit.

Its function is as follows. Binds the lower part of the 30S subunit head. This chain is Small ribosomal subunit protein uS3, found in Thermoplasma acidophilum (strain ATCC 25905 / DSM 1728 / JCM 9062 / NBRC 15155 / AMRC-C165).